The following is a 545-amino-acid chain: Cytochrome P450 monooxygenase sdnB (545 aa).

A glycan (N-linked (GlcNAc...) asparagine) is linked at asparagine 5. The chain crosses the membrane as a helical span at residues 30–50 (SILALTPLQGIALFLCLFWGY). The N-linked (GlcNAc...) asparagine glycan is linked to asparagine 276. The chain crosses the membrane as a helical span at residues 322–342 (LPILILIILVPAAHTTAMGIS). Asparagine 393 and asparagine 476 each carry an N-linked (GlcNAc...) asparagine glycan. Cysteine 486 provides a ligand contact to heme.

This sequence belongs to the cytochrome P450 family. It depends on heme as a cofactor.

It localises to the membrane. It participates in antibiotic biosynthesis. In terms of biological role, cytochrome P450 monooxygenase; part of the gene cluster that mediates the biosynthesis of sordarin and hypoxysordarin, glycoside antibiotics with a unique tetracyclic diterpene aglycone structure. First, the geranylgeranyl diphosphate synthase sdnC constructs GGDP from farnesyl diphosphate and isopentenyl diphosphate. The diterpene cyclase sdnA then catalyzes the cyclization of GGDP to afford cycloaraneosene. Cycloaraneosene is then hydroxylated four times by the putative cytochrome P450 monooxygenases sdnB, sdnE, sdnF and sdnH to give a hydroxylated cycloaraneosene derivative such as cycloaraneosene-8,9,13,19-tetraol. Although the order of the hydroxylations is unclear, at least C8, C9 and C13 of the cycloaraneosene skeleton are hydroxylated before the sordaricin formation. Dehydration of the 13-hydroxy group of the hydroxylated cycloaraneosene derivative might be catalyzed by an unassigned hypothetical protein such as sdnG and sdnP to construct the cyclopentadiene moiety. The FAD-dependent oxidoreductase sdnN is proposed to catalyze the oxidation at C9 of the hydroxylated cycloaraneosene derivative and also catalyze the Baeyer-Villiger oxidation to give the lactone intermediate. The presumed lactone intermediate would be hydrolyzed to give an acrolein moiety and a carboxylate moiety. Then, [4+2]cycloaddition would occur between the acrolein moiety and the cyclopentadiene moiety to give sordaricin. SdnN might also be involved in the [4+2]cycloaddition after the hypothesized oxidation to accommodate the oxidized product and prompt the [4+2]cycloaddition. GDP-6-deoxy-D-altrose may be biosynthesized from GDP-D-mannose by the putative GDP-mannose-4,6-dehydratase sdnI and the short-chain dehydrogenase sdnK. The glycosyltransferase sdnJ catalyzes the attachment of 6-deoxy-D-altrose onto the 19-hydroxy group of sordaricin to give 4'-O-demethylsordarin. The methyltransferase sdnD would complete the biosynthesis of sordarin. Sordarin can be further modified into hypoxysordarin. The unique acyl chain at the 3'-hydroxy group of hypoxysordarin would be constructed by an iterative type I PKS sdnO and the trans-acting polyketide methyltransferase sdnL. SdnL would be responsible for the introduction of an alpha-methyl group of the polyketide chain. Alternatively, the beta-lactamase-like protein sdnR might be responsible for the cleavage and transfer of the polyketide chain from the PKS sdnO to sordarin. Two putative cytochrome P450 monooxygenases, sdnQ and sdnT, might catalyze the epoxidations of the polyketide chain to complete the biosynthesis of hypoxysordarin. Transcriptional regulators sdnM and sdnS are presumably encoded for the transcriptional regulation of the expression of the sdn gene cluster. The chain is Cytochrome P450 monooxygenase sdnB from Sordaria araneosa (Pleurage araneosa).